A 290-amino-acid polypeptide reads, in one-letter code: METVVDKDVLKSSGAELLPDGRRGLRIHDWEIETLRGTILTSLAVEEWEKKLKTSHLPEMVFGENALVLKHLGSNTKIHFNAFDALAGWKQEGLPPVEVPAAAQWKFRSKPSQQVILDYDYTFTTPYCGSEVVEKDKETVEAKANPKGEATLQWENCEDQIDLAALSLKEPILFYDEVVLYEDELADNGVSLLTVKVRVMPSSWFLLLRFWLRVDGVLMRLRETRMHYRFGEDEAPTVLRENCWREATFQSLSAKGYPVDLAVWSDPSSISQRLPVIKHTTQKLKIPSKV.

Belongs to the TIP41 family. In terms of assembly, interacts with TAP46. As to expression, widely expressed.

May be involved in the regulation of the TOR signaling pathway. Indirectly activates the PP2A phosphatase via interaction with its suppressor TAP46. Could play a role in cytoskeleton functions. This Arabidopsis thaliana (Mouse-ear cress) protein is TIP41-like protein.